The following is a 213-amino-acid chain: Uracil phosphoribosyltransferase (213 aa).

5-phospho-alpha-D-ribose 1-diphosphate is bound by residues arginine 78, arginine 103, and aspartate 131–threonine 139. Uracil contacts are provided by residues isoleucine 197 and glycine 202–alanine 204. Residue aspartate 203 coordinates 5-phospho-alpha-D-ribose 1-diphosphate.

It belongs to the UPRTase family. Requires Mg(2+) as cofactor.

The enzyme catalyses UMP + diphosphate = 5-phospho-alpha-D-ribose 1-diphosphate + uracil. Its pathway is pyrimidine metabolism; UMP biosynthesis via salvage pathway; UMP from uracil: step 1/1. Its activity is regulated as follows. Allosterically activated by GTP. In terms of biological role, catalyzes the conversion of uracil and 5-phospho-alpha-D-ribose 1-diphosphate (PRPP) to UMP and diphosphate. This is Uracil phosphoribosyltransferase from Bifidobacterium longum (strain DJO10A).